The primary structure comprises 665 residues: Protein Fe65 homolog (665 aa).

A compositionally biased stretch (basic and acidic residues) spans 1 to 12 (MREGTPRVRIEV). 2 disordered regions span residues 1 to 43 (MREG…DTAT) and 90 to 111 (SRGY…RRRN). Over residues 14–24 (KGSNRPSQFVS) the composition is skewed to polar residues. Composition is skewed to basic and acidic residues over residues 27-40 (EEQR…RDSD) and 102-111 (GRREEERRRN). Residues 233–266 (KDLPPGWEKHEDPQGYSYYWHVDSGTIQRQPPPP) form the WW domain. PID domains are found at residues 330 to 456 (VRFA…RDIC) and 499 to 615 (FLGV…VLDA).

Interacts (via PID 2 domain) with apl-1 (via cytoplasmic domain). In terms of processing, phosphorylated. Expressed in the pharynx (including pharyngeal muscle and nerve cells), ventral nerve cord and tail neurons.

The protein resides in the cytoplasm. Its subcellular location is the cytoskeleton. In terms of biological role, modulates pharyngeal pumping activity, at least in part by regulating expression of the acetylcholinesterase genes ace-1 and ace-2. In Caenorhabditis elegans, this protein is Protein Fe65 homolog.